Here is a 146-residue protein sequence, read N- to C-terminus: Hemoglobin subunit beta (146 aa).

At Thr1 the chain carries Blocked amino end (Thr). The Globin domain maps to 2–146 (HWTAEERHYI…VAHALTLQYH (145 aa)). 2 residues coordinate heme b: His63 and His92.

This sequence belongs to the globin family. Heterotetramer of two alpha chains and two beta chains. In terms of tissue distribution, red blood cells.

Functionally, involved in oxygen transport from the lung to the various peripheral tissues. The sequence is that of Hemoglobin subunit beta (HBB) from Caretta caretta (Loggerhead sea turtle).